Here is a 708-residue protein sequence, read N- to C-terminus: Transcriptional regulator nsrM (708 aa).

Residues 37-63 (CVRCQQRKVRCDHKSPCGNCVASDSQC) constitute a DNA-binding region (zn(2)-C6 fungal-type).

The protein resides in the nucleus. Its function is as follows. Transcriptional regulator; part of the gene cluster that mediates the biosynthesis of the tetrahydroxanthone dimer neosartorin, which exhibits antibacterial activity. The chain is Transcriptional regulator nsrM from Aspergillus novofumigatus (strain IBT 16806).